Reading from the N-terminus, the 408-residue chain is E3 ubiquitin-protein ligase At1g12760 (408 aa).

The interval 1–52 (MSTETTTGNSSLIPASSSSSSSDAIDPAPLLFNGDDNEGNNGGGGGERRSVR) is disordered. Residues 10 to 34 (SSLIPASSSSSSSDAIDPAPLLFNG) are compositionally biased toward low complexity. Helical transmembrane passes span 100–120 (VVVL…AILV) and 133–153 (VWLL…CVEY). Residues 160–195 (RTNRTTTTTPPRSRSSSSSSSSSSLEEEALGSRRNS) are disordered. Low complexity predominate over residues 163 to 183 (RTTTTTPPRSRSSSSSSSSSS). Transmembrane regions (helical) follow at residues 219–239 (ANTM…SAGG), 254–274 (IVFL…ACVI), and 275–295 (GIAV…VADQ). An RING-type; atypical zinc finger spans residues 353–394 (CCICLSAYEDGTELRELPCGHHFHCSCVDKWLYINATCPLCK).

It is found in the membrane. It carries out the reaction S-ubiquitinyl-[E2 ubiquitin-conjugating enzyme]-L-cysteine + [acceptor protein]-L-lysine = [E2 ubiquitin-conjugating enzyme]-L-cysteine + N(6)-ubiquitinyl-[acceptor protein]-L-lysine.. It functions in the pathway protein modification; protein ubiquitination. Mediates E2-dependent protein ubiquitination in vitro. This is E3 ubiquitin-protein ligase At1g12760 from Arabidopsis thaliana (Mouse-ear cress).